A 534-amino-acid chain; its full sequence is Phosphoenolpyruvate carboxykinase (ATP) (534 aa).

Substrate-binding residues include arginine 59, tyrosine 200, and lysine 206. Residues lysine 206, histidine 225, and 242 to 250 (GLSGTGKTT) each bind ATP. 2 residues coordinate Mn(2+): lysine 206 and histidine 225. Residue aspartate 263 coordinates Mn(2+). Residues glutamate 291, arginine 327, 443-444 (RI), and threonine 449 each bind ATP. Arginine 327 provides a ligand contact to substrate.

This sequence belongs to the phosphoenolpyruvate carboxykinase (ATP) family. It depends on Mn(2+) as a cofactor.

It is found in the cytoplasm. The enzyme catalyses oxaloacetate + ATP = phosphoenolpyruvate + ADP + CO2. The protein operates within carbohydrate biosynthesis; gluconeogenesis. Functionally, involved in the gluconeogenesis. Catalyzes the conversion of oxaloacetate (OAA) to phosphoenolpyruvate (PEP) through direct phosphoryl transfer between the nucleoside triphosphate and OAA. This chain is Phosphoenolpyruvate carboxykinase (ATP), found in Agathobacter rectalis (strain ATCC 33656 / DSM 3377 / JCM 17463 / KCTC 5835 / VPI 0990) (Eubacterium rectale).